The following is a 217-amino-acid chain: Uracil-DNA glycosylase (217 aa).

Asp62 functions as the Proton acceptor in the catalytic mechanism.

Belongs to the uracil-DNA glycosylase (UDG) superfamily. UNG family.

It localises to the cytoplasm. The catalysed reaction is Hydrolyzes single-stranded DNA or mismatched double-stranded DNA and polynucleotides, releasing free uracil.. In terms of biological role, excises uracil residues from the DNA which can arise as a result of misincorporation of dUMP residues by DNA polymerase or due to deamination of cytosine. This chain is Uracil-DNA glycosylase, found in Streptococcus pyogenes serotype M28 (strain MGAS6180).